A 444-amino-acid polypeptide reads, in one-letter code: Ribosomal protein uS12 methylthiotransferase RimO (444 aa).

The MTTase N-terminal domain occupies 3–119 (IKIGLVSLGC…IARAVRRVLE (117 aa)). C12, C48, C82, C156, C160, and C163 together coordinate [4Fe-4S] cluster. The Radical SAM core domain occupies 142–372 (ATPPYTAYLK…MMLQQEISLQ (231 aa)). The 70-residue stretch at 375–444 (LKRVGEVIEV…EYDLTGETVL (70 aa)) folds into the TRAM domain.

This sequence belongs to the methylthiotransferase family. RimO subfamily. It depends on [4Fe-4S] cluster as a cofactor.

The protein localises to the cytoplasm. It carries out the reaction L-aspartate(89)-[ribosomal protein uS12]-hydrogen + (sulfur carrier)-SH + AH2 + 2 S-adenosyl-L-methionine = 3-methylsulfanyl-L-aspartate(89)-[ribosomal protein uS12]-hydrogen + (sulfur carrier)-H + 5'-deoxyadenosine + L-methionine + A + S-adenosyl-L-homocysteine + 2 H(+). Catalyzes the methylthiolation of an aspartic acid residue of ribosomal protein uS12. The protein is Ribosomal protein uS12 methylthiotransferase RimO of Pelotomaculum thermopropionicum (strain DSM 13744 / JCM 10971 / SI).